A 908-amino-acid chain; its full sequence is Oxysterol-binding protein 2 (908 aa).

A disordered region spans residues 42-112 (SAFGSGPASK…GLWPGSENGT (71 aa)). Positions 81 to 90 (EPGSQTTSVP) are enriched in polar residues. One can recognise a PH domain in the interval 179–271 (LDSYKGWLLK…WITALELAKA (93 aa)). Disordered stretches follow at residues 279-299 (TQSD…DNSE), 413-445 (RAFC…SEED), and 822-843 (LMER…EKQR). S284 carries the post-translational modification Phosphoserine. The segment covering 424 to 437 (SSSKSFSEGSFLTS) has biased composition (low complexity).

The protein belongs to the OSBP family. Interacts with CCDC159. As to expression, expressed in the testis (at protein level). Expressed in postmeiotic germ cells of the testis.

It localises to the membrane. The protein localises to the cytoplasmic vesicle. Its subcellular location is the secretory vesicle. It is found in the acrosome. Its function is as follows. Binds 7-ketocholesterol. Acts during spermatid development where its function is required prior to the removal of cytoplasm from the sperm head. This Mus musculus (Mouse) protein is Oxysterol-binding protein 2 (Osbp2).